The following is a 278-amino-acid chain: Hydroxyethylthiazole kinase (278 aa).

Met49 contributes to the substrate binding site. Positions 125 and 171 each coordinate ATP. Gly198 lines the substrate pocket.

The protein belongs to the Thz kinase family. Requires Mg(2+) as cofactor.

The enzyme catalyses 5-(2-hydroxyethyl)-4-methylthiazole + ATP = 4-methyl-5-(2-phosphooxyethyl)-thiazole + ADP + H(+). The protein operates within cofactor biosynthesis; thiamine diphosphate biosynthesis; 4-methyl-5-(2-phosphoethyl)-thiazole from 5-(2-hydroxyethyl)-4-methylthiazole: step 1/1. In terms of biological role, catalyzes the phosphorylation of the hydroxyl group of 4-methyl-5-beta-hydroxyethylthiazole (THZ). The polypeptide is Hydroxyethylthiazole kinase (Natronomonas pharaonis (strain ATCC 35678 / DSM 2160 / CIP 103997 / JCM 8858 / NBRC 14720 / NCIMB 2260 / Gabara) (Halobacterium pharaonis)).